Reading from the N-terminus, the 514-residue chain is Acetylcholine receptor subunit gamma (514 aa).

Positions 1–22 (MRCSDLLLLFLLALCVLPGISC) are cleaved as a signal peptide. Over 23–241 (RNQEEKLLQD…VIFYLIIQRK (219 aa)) the chain is Extracellular. Residues cysteine 150 and cysteine 164 are joined by a disulfide bond. The N-linked (GlcNAc...) asparagine glycan is linked to asparagine 163. 3 helical membrane passes run 242–266 (PLFYIINIIVPCVLISSMAVLVYFL), 275–293 (CTVSINVLLAQTVFLFLIA), and 309–330 (YLTFLMVVTVVIVVNAVIVLNV). Residues 331–473 (SLRTPNTHSM…WILVGRVIDR (143 aa)) are Cytoplasmic-facing. Tyrosine 386 carries the phosphotyrosine; by Tyr-kinases modification. The chain crosses the membrane as a helical span at residues 474-494 (VCFFIMASLFVCGTIGIFLMA).

It belongs to the ligand-gated ion channel (TC 1.A.9) family. Acetylcholine receptor (TC 1.A.9.1) subfamily. Gamma/CHRNG sub-subfamily. In terms of assembly, pentamer of two alpha chains, and one each of the beta, delta, and gamma chains.

Its subcellular location is the postsynaptic cell membrane. It localises to the cell membrane. It catalyses the reaction K(+)(in) = K(+)(out). The catalysed reaction is Na(+)(in) = Na(+)(out). After binding acetylcholine, the AChR responds by an extensive change in conformation that affects all subunits and leads to opening of an ion-conducting channel across the plasma membrane. The protein is Acetylcholine receptor subunit gamma (CHRNG) of Gallus gallus (Chicken).